A 1066-amino-acid polypeptide reads, in one-letter code: FHIP family protein GI14169 (1066 aa).

Polar residues predominate over residues 1–11; the sequence is MSWLRTSPLRQ. Residues 1 to 35 form a disordered region; the sequence is MSWLRTSPLRQSLTRSGSSSGNGSSGTATTMRQRP. Positions 12 to 30 are enriched in low complexity; it reads SLTRSGSSSGNGSSGTATT. Phosphoserine is present on Ser500. A disordered region spans residues 651–682; the sequence is GIDVTTTTTASASDTDLEHNNNSSSISSGRRD. A compositionally biased stretch (low complexity) spans 655–678; sequence TTTTTASASDTDLEHNNNSSSISS. Residue Ser820 is modified to Phosphoserine. 2 disordered regions span residues 821–913 and 935–1007; these read PLHQ…GNSA and SGGE…TGNF. Positions 822–855 are enriched in low complexity; the sequence is LHQQLQHQQQHQQLAQTNSHTQQQQQQQQQQAQQ. Residues 856–874 show a composition bias toward polar residues; sequence RSTYATLSAATPVQASPTS. Over residues 890–913 the composition is skewed to low complexity; the sequence is SRSITSMFSRRSTSSTPASNGNSA. The span at 947–971 shows a compositional bias: polar residues; it reads QDSTRGNTCETSLSTAPRQEPQTNV. Residues 972–997 show a composition bias toward low complexity; that stretch reads GSSSNSSIGSSTQTLSGTHSSSTLHG.

It belongs to the FHIP family.

This is FHIP family protein GI14169 from Drosophila mojavensis (Fruit fly).